The primary structure comprises 86 residues: U-myrmeciitoxin(01)-Mg1a (86 aa).

An N-terminal signal peptide occupies residues 1–26; it reads MKLLYLLLTLAIIFVLTIVHAPNVEA. Positions 27 to 52 are excised as a propeptide; the sequence is KALADPESDAVGFADAFGDADAEATG. Position 85 is a leucine amide (leucine 85).

Belongs to the formicidae venom precursor-01 superfamily. As to expression, expressed by the venom gland. This toxin is detected along the entire venom gland, as well as in the venom reservoir, the venom duct and in the venom. No toxin are detected in the Dufour's gland.

The protein localises to the secreted. The protein resides in the target cell membrane. Functionally, toxin that may interact with target cell membranes, producing a concentration-dependent leak in ion conductance, possibly via multimeric pore formation. It produces an immediate sharp increase of calcium concentration in all DRG neurons. This influx in calcium stabilizes without resulting in any observable dye leakage, showing that the effect is not simply cytolytic. This toxin may be one of the major contributors to the pain associated with envenomation. The toxin also displays a weak cytotoxicity (on HEK cells) and some antimicrobial activity (MIC=2.5 uM on C.neoformans (var. grubii), MIC=10.2 uM on S.aureus), but is not hemolytic to human erythtrocytes. In vivo, intraplantar injection into mice causes spontaneous nocifensive behavior (licking, flinching, or shaking of the paw), which lasts 5-7 minutes (10 and 100 uM tested). Mechanical and heat hypoalgesia are observed at 20 and 25 minutes after injection (highest dose tested of 100 uM). In vivo, injection into crickets (A.domesticus) causes an immediate, dose-dependent, reversible and nonlethal incapacitation that lasts about 53 minutes at the highest dose tested (60 ug/g). The polypeptide is U-myrmeciitoxin(01)-Mg1a (Myrmecia gulosa (Red bulldog ant)).